Consider the following 516-residue polypeptide: uncharacterized protein (516 aa).

It to H.influenzae HI_0521.

This is an uncharacterized protein from Escherichia coli (strain K12).